The primary structure comprises 280 residues: Bifunctional protein FolD (280 aa).

Residues 165–167, S190, and I231 each bind NADP(+); that span reads GRS.

Belongs to the tetrahydrofolate dehydrogenase/cyclohydrolase family. Homodimer.

The catalysed reaction is (6R)-5,10-methylene-5,6,7,8-tetrahydrofolate + NADP(+) = (6R)-5,10-methenyltetrahydrofolate + NADPH. It carries out the reaction (6R)-5,10-methenyltetrahydrofolate + H2O = (6R)-10-formyltetrahydrofolate + H(+). Its pathway is one-carbon metabolism; tetrahydrofolate interconversion. In terms of biological role, catalyzes the oxidation of 5,10-methylenetetrahydrofolate to 5,10-methenyltetrahydrofolate and then the hydrolysis of 5,10-methenyltetrahydrofolate to 10-formyltetrahydrofolate. The chain is Bifunctional protein FolD from Moorella thermoacetica (strain ATCC 39073 / JCM 9320).